The primary structure comprises 159 residues: uncharacterized protein (159 aa).

3 helical membrane-spanning segments follow: residues 16–36 (IVLP…AFIF), 84–104 (VYAG…LLII), and 112–132 (VFFY…LLPV).

The protein localises to the cell membrane. This is an uncharacterized protein from Bacillus subtilis (strain 168).